Consider the following 121-residue polypeptide: Ribosome-binding factor A (121 aa).

It belongs to the RbfA family. As to quaternary structure, monomer. Binds 30S ribosomal subunits, but not 50S ribosomal subunits or 70S ribosomes.

It localises to the cytoplasm. One of several proteins that assist in the late maturation steps of the functional core of the 30S ribosomal subunit. Associates with free 30S ribosomal subunits (but not with 30S subunits that are part of 70S ribosomes or polysomes). Required for efficient processing of 16S rRNA. May interact with the 5'-terminal helix region of 16S rRNA. The chain is Ribosome-binding factor A from Agathobacter rectalis (strain ATCC 33656 / DSM 3377 / JCM 17463 / KCTC 5835 / VPI 0990) (Eubacterium rectale).